The chain runs to 621 residues: DNA mismatch repair protein MutL (621 aa).

It belongs to the DNA mismatch repair MutL/HexB family.

Its function is as follows. This protein is involved in the repair of mismatches in DNA. It is required for dam-dependent methyl-directed DNA mismatch repair. May act as a 'molecular matchmaker', a protein that promotes the formation of a stable complex between two or more DNA-binding proteins in an ATP-dependent manner without itself being part of a final effector complex. The sequence is that of DNA mismatch repair protein MutL from Petrotoga mobilis (strain DSM 10674 / SJ95).